A 267-amino-acid polypeptide reads, in one-letter code: Interleukin-2 receptor subunit alpha (267 aa).

The signal sequence occupies residues 1–21 (MEPHLLMLGFLSFTIVPGCWA). A Sushi 1 domain is found at 22 to 79 (ELCLYDPPEVPNATFKALSYKNGTILNCECKRGFRRLNELVYMACLGNSWSNNCQCTS). Residues 22-235 (ELCLYDPPEV…ETFVFTKEYQ (214 aa)) lie on the Extracellular side of the membrane. 3 disulfides stabilise this stretch: Cys24-Cys66, Cys49-Cys75, and Cys51-Cys77. 2 N-linked (GlcNAc...) asparagine glycosylation sites follow: Asn33 and Asn43. Residues 82 to 93 (HDNSREQVTPQP) are compositionally biased toward polar residues. The segment at 82 to 108 (HDNSREQVTPQPEGQKEQQTTDTQKST) is disordered. Positions 98-108 (EQQTTDTQKST) are enriched in low complexity. Positions 118–181 (GHCREPPPWR…WTHPQLTCVD (64 aa)) constitute a Sushi 2 domain. Disulfide bonds link Cys120/Cys163 and Cys147/Cys179. Positions 191–215 (SEESQGSRNSFPESEASCPTPNTDF) are disordered. Residues 192–215 (EESQGSRNSFPESEASCPTPNTDF) are compositionally biased toward polar residues. Residues 236–256 (VAVASCIFLLLSILLLSGFTW) traverse the membrane as a helical segment. At 257–267 (QHRWRKSRRTI) the chain is on the cytoplasmic side.

As to quaternary structure, non-covalent dimer of an alpha and a beta subunit. IL2R exists in 3 different forms: a high affinity dimer, an intermediate affinity monomer (beta subunit), and a low affinity monomer (alpha subunit). The high and intermediate affinity forms also associate with a gamma subunit.

It localises to the membrane. Functionally, receptor for interleukin-2. The receptor is involved in the regulation of immune tolerance by controlling regulatory T cells (TREGs) activity. TREGs suppress the activation and expansion of autoreactive T-cells. The protein is Interleukin-2 receptor subunit alpha (Il2ra) of Rattus norvegicus (Rat).